Reading from the N-terminus, the 773-residue chain is Beta-hexosaminidase B (773 aa).

The signal sequence occupies residues 1–19 (MKFNRLMALLFGVSSPLYA). Intrachain disulfides connect cysteine 46–cysteine 53, cysteine 389–cysteine 397, and cysteine 496–cysteine 542. Glutamate 531 serves as the catalytic Proton donor.

The protein belongs to the glycosyl hydrolase 20 family.

It catalyses the reaction Hydrolysis of terminal non-reducing N-acetyl-D-hexosamine residues in N-acetyl-beta-D-hexosaminides.. The chain is Beta-hexosaminidase B (nag096) from Pseudoalteromonas piscicida.